A 232-amino-acid chain; its full sequence is NKG2-D type II integral membrane protein (232 aa).

At 1–66 (MALIRDRKSH…IEKLKISPMF (66 aa)) the chain is on the cytoplasmic side. Residues 67–89 (VVRVLAIALAIRFTLNTLMWLAI) form a helical; Signal-anchor for type II membrane protein membrane-spanning segment. The Extracellular portion of the chain corresponds to 90–232 (FKETFQPVLC…NTYICMKRAV (143 aa)). Intrachain disulfides connect Cys112-Cys121 and Cys115-Cys126. One can recognise a C-type lectin domain in the interval 122–228 (HRNNCYQFFN…CANLNTYICM (107 aa)). 3 N-linked (GlcNAc...) asparagine glycosylation sites follow: Asn137, Asn147, and Asn179. 2 cysteine pairs are disulfide-bonded: Cys143-Cys227 and Cys205-Cys219.

Homodimer; disulfide-linked. Heterohexamer composed of two subunits of KLRK1 and four subunits of HCST/DAP10. Isoform 1 (via transmembrane domain) interacts with HCST/DAP10; the interaction is required for KLRK1 cell surface expression on activated CD8(+) T-cells, but is dispensable on activated TYROBP-expressing NK cells. Isoform 2 (via transmembrane domain) interacts with HCST/DAP10 (via transmembrane domain); the interaction is required for KLRK1 NK cell surface expression and induces NK cell-mediated cytotoxicity. Isoform 2 (via transmembrane domain) interacts with TYROBP (via transmembrane domain); the interaction is required for KLRK1 NK cell surface expression and induce NK cell-mediated cytotoxicity and cytokine secretion. Isoform 1 does not interact with TYROBP. Interacts with CEACAM1; recruits PTPN6 that dephosphorylates VAV1. Expressed in natural killer (NK) cells, activated CD8(+) alpha-beta and gamma-delta T-cells and natural killer T (NKT) cells (at protein level). May be expressed on dendritic cell (DC). Isoform 1 is strongly expressed in natural killer (NK) cells. Isoform 2 is weakly expressed in natural killer (NK) cells. Isoform 1 and isoform 2 are expressed in stimulated, but not in unstimulated, CD8(+) T-cells and macrophages.

Its subcellular location is the cell membrane. In terms of biological role, functions as an activating and costimulatory receptor involved in immunosurveillance upon binding to various cellular stress-inducible ligands displayed at the surface of autologous tumor cells and virus-infected cells. Provides both stimulatory and costimulatory innate immune responses on activated killer (NK) cells, leading to cytotoxic activity. Acts as a costimulatory receptor for T-cell receptor (TCR) in CD8(+) T-cell-mediated adaptive immune responses by amplifying T-cell activation. Stimulates perforin-mediated elimination of ligand-expressing tumor cells. Signaling involves calcium influx, culminating in the expression of TNF-alpha. Participates in NK cell-mediated bone marrow graft rejection. May play a regulatory role in differentiation and survival of NK cells. Binds to ligands belonging to various subfamilies of MHC class I-related glycoproteins including RAET1A, RAET1B, RAET1C, RAET1D, RAET1E, H60 and MULT1. This is NKG2-D type II integral membrane protein (Klrk1) from Mus musculus (Mouse).